Consider the following 210-residue polypeptide: Protein GET1 (210 aa).

Residues 1 to 4 are Lumenal-facing; sequence MPSL. A helical transmembrane segment spans residues 5-24; that stretch reads LIIVLIIHVVTYLINTIGAN. At 25 to 110 the chain is on the cytoplasmic side; sequence TIDSLLWLLY…SFDLAVKSVR (86 aa). Positions 39-95 form a coiled coil; the sequence is NQTSQTADEQRRLKREVMQLKREMNATSSQDEFAKWAKLRRRHDKTMEEYEAKNKAL. The chain crosses the membrane as a helical span at residues 111–131; the sequence is FFSTTGLKLFLQFWFSKTPIF. Residues 132–155 are Lumenal-facing; it reads ELPRGWIPWQVEWVLSFPRAPLGT. The helical transmembrane segment at 156-172 threads the bilayer; the sequence is VSIQIWGGVCATVVSLA. Over 173–210 the chain is Cytoplasmic; that stretch reads GDAIGVVNVYLTSKAPKQKEPATSGENSARPMAIKKEL. The interval 189–210 is disordered; it reads KQKEPATSGENSARPMAIKKEL.

It belongs to the WRB/GET1 family. Interacts with GET3.

The protein localises to the endoplasmic reticulum membrane. Its function is as follows. Required for the post-translational delivery of tail-anchored (TA) proteins to the endoplasmic reticulum. Acts as a membrane receptor for soluble GET3, which recognizes and selectively binds the transmembrane domain of TA proteins in the cytosol. This is Protein GET1 from Coccidioides posadasii (strain C735) (Valley fever fungus).